The sequence spans 375 residues: uncharacterized protein (375 aa).

Positions 1-20 (MKNKLFIILIIFIILKIVIC) are cleaved as a signal peptide. At 21-335 (QNTTPSKLIP…EKQVERKITP (315 aa)) the chain is on the extracellular side. Low complexity predominate over residues 30–42 (PQQQQKQKQQQTQ). Disordered stretches follow at residues 30-74 (PQQQ…QPQQ) and 113-253 (SQNV…PHNH). Basic residues predominate over residues 43 to 53 (PHHHHHHHQQH). Positions 54–74 (QQHQQQHQPNQQIKQQQQPQQ) are enriched in low complexity. The span at 120–151 (PPHHTQQRVPHHHGPNGAPHHHGPNGAPHHHG) shows a compositional bias: basic residues. A compositionally biased stretch (polar residues) spans 168 to 180 (GHNTQGHVQTNHV). A compositionally biased stretch (low complexity) spans 181–220 (NNINKNNINNNNNNNNNNNNNNNNNNNNNINDNKNIRNNI). A helical membrane pass occupies residues 336 to 356 (IMVLYILLASTMVIQLFIMVF). Topologically, residues 357–375 (KQVKHIREINAKTTMESLL) are cytoplasmic.

Its subcellular location is the membrane. This is an uncharacterized protein from Dictyostelium discoideum (Social amoeba).